The primary structure comprises 193 residues: Interleukin-23 subunit alpha (193 aa).

Residues 1-22 (MLGSRAVMLMLLLLLLPWTSQG) form the signal peptide.

Belongs to the IL-6 superfamily. As to quaternary structure, heterodimer with IL12B; disulfide-linked. The heterodimer is known as interleukin IL-23. Interacts with IL23R; this interaction enables recruitment of IL12RB1.

Its subcellular location is the secreted. In terms of biological role, associates with IL12B to form the pro-inflammatory cytokine IL-23 that plays different roles in innate and adaptive immunity. Released by antigen-presenting cells such as dendritic cells or macrophages, binds to a heterodimeric receptor complex composed of IL12RB1 and IL23R to activate JAK2 and TYK2 which then phosphorylate the receptor to form a docking site leading to the phosphorylation of STAT3 and STAT4. This process leads to activation of several pathways including p38 MAPK or NF-kappa-B and promotes the production of pro-inflammatory cytokines such as interleukin-17A/IL17A. In turn, participates in the early and effective intracellular bacterial clearance. Promotes the expansion and survival of T-helper 17 cells, a CD4-positive helper T-cell subset that produces IL-17, as well as other IL-17-producing cells. The sequence is that of Interleukin-23 subunit alpha (IL23A) from Sus scrofa (Pig).